The following is a 325-amino-acid chain: tRNA dimethylallyltransferase (325 aa).

25–32 lines the ATP pocket; it reads GNTGSGKS. 27-32 serves as a coordination point for substrate; sequence TGSGKS. Residues 50-53 form an interaction with substrate tRNA region; sequence DSRQ.

It belongs to the IPP transferase family. As to quaternary structure, monomer. Requires Mg(2+) as cofactor.

It carries out the reaction adenosine(37) in tRNA + dimethylallyl diphosphate = N(6)-dimethylallyladenosine(37) in tRNA + diphosphate. In terms of biological role, catalyzes the transfer of a dimethylallyl group onto the adenine at position 37 in tRNAs that read codons beginning with uridine, leading to the formation of N6-(dimethylallyl)adenosine (i(6)A). The protein is tRNA dimethylallyltransferase of Dehalococcoides mccartyi (strain ATCC BAA-2266 / KCTC 15142 / 195) (Dehalococcoides ethenogenes (strain 195)).